The following is a 97-amino-acid chain: U6-theraphotoxin-Hhn1a 3 (97 aa).

The first 33 residues, 1-33, serve as a signal peptide directing secretion; sequence MLIKQFSRRSKNTKVQILLAFAALFVLAVGSYA. A propeptide spanning residues 34 to 61 is cleaved from the precursor; that stretch reads SESKKLDLRDALFSAMFSADYQLNPQER. Disulfide bonds link cysteine 63–cysteine 77, cysteine 70–cysteine 82, and cysteine 76–cysteine 89.

It belongs to the neurotoxin 10 (Hwtx-1) family. 12 (Hntx-12) subfamily. As to expression, expressed by the venom gland.

Its subcellular location is the secreted. Functionally, ion channel inhibitor. This is U6-theraphotoxin-Hhn1a 3 from Cyriopagopus hainanus (Chinese bird spider).